The following is a 209-amino-acid chain: Small ribosomal subunit protein uS3 (209 aa).

Positions 38–107 (IRNFIKKNYN…KFGIDIIELK (70 aa)) constitute a KH type-2 domain.

It belongs to the universal ribosomal protein uS3 family. Part of the 30S ribosomal subunit. Forms a tight complex with proteins S10 and S14.

Its function is as follows. Binds the lower part of the 30S subunit head. Binds mRNA in the 70S ribosome, positioning it for translation. This is Small ribosomal subunit protein uS3 from Fervidobacterium nodosum (strain ATCC 35602 / DSM 5306 / Rt17-B1).